Consider the following 408-residue polypeptide: MQVTMKSSAVSGQRVGGARVATRSVRRAQLQVVAPSRKQMGRWRSIDAGVDASDDQQDITRGREMVDDLFQGGFGAGGTHNAVLSSQEYLSQSRASFNNIEDGFYISPAFLDKMTIHIAKNFMDLPKIKVPLILGIWGGKGQGKTFQCALAYKKLGIAPIVMSAGELESGNAGEPAKLIRTRYREASDIIKKGRMCSLFINDLDAGAGRMGDTTQYTVNNQMVNATLMNIADNPTNVQLPGVYKNEEIPRVPIVCTGNDFSTLYAPLIRDGRMEKYYWNPTREDRIGVCMGIFQEDNVQRREVENLVDTFPGQSIDFFGALRARVYDDMVRQWITDTGVDKIGQQLVNARQKVAMPKVSMDLNVLIKYGKSLVDEQENVKRVQLADAYLSGAELAGHGGSSLPEAYSR.

Residues 1–32 (MQVTMKSSAVSGQRVGGARVATRSVRRAQLQV) constitute a chloroplast transit peptide. 138–145 (GGKGQGKT) lines the ATP pocket.

It belongs to the RuBisCO activase family. Monomer.

Its subcellular location is the plastid. It localises to the chloroplast stroma. Its function is as follows. Activation of RuBisCO (ribulose-1,5-bisphosphate carboxylase/oxygenase; EC 4.1.1.39) involves the ATP-dependent carboxylation of the epsilon-amino group of lysine leading to a carbamate structure. The protein is Ribulose bisphosphate carboxylase/oxygenase activase, chloroplastic of Chlamydomonas reinhardtii (Chlamydomonas smithii).